A 337-amino-acid chain; its full sequence is Casein kinase I isoform alpha (337 aa).

One can recognise a Protein kinase domain in the interval 20-288; the sequence is YRVIRKIGSG…YLRQLFRILF (269 aa). Residues 26 to 34 and Lys-49 contribute to the ATP site; that span reads IGSGSFGDI. Asp-139 serves as the catalytic Proton acceptor.

Belongs to the protein kinase superfamily. CK1 Ser/Thr protein kinase family. Casein kinase I subfamily. In terms of assembly, interacts with cos. Mg(2+) serves as cofactor. Phosphorylated. The dephosphorylated kinase is active in the cytoplasm while the active kinase in the nucleus is phosphorylated.

Its subcellular location is the cytoplasm. It is found in the nucleus. It catalyses the reaction L-seryl-[protein] + ATP = O-phospho-L-seryl-[protein] + ADP + H(+). It carries out the reaction L-threonyl-[protein] + ATP = O-phospho-L-threonyl-[protein] + ADP + H(+). With respect to regulation, activity increases following DNA damage. In terms of biological role, casein kinases are operationally defined by their preferential utilization of acidic proteins such as caseins as substrates. Can phosphorylate a large number of proteins. Negative regulator of wg signaling. Phosphorylates arm directly or indirectly and stimulates its degradation which prevents inappropriate wg signaling. Phosphorylates smo which promotes its accumulation at the cell surface and its signaling activity in response to hh. Together with dco, regulates proteolytic processing of ci by phosphorylating it, which promotes its binding to slmb, the F-box recognition component of the SCF(slmb) E3 ubiquitin-protein ligase required for ci processing. Inhibits condensin II interphase activity by promoting degradation of the Cap-H2 regulatory subunit and limiting the levels of chromatin-bound Cap-H2 which regulates interphase chromosome organization. The sequence is that of Casein kinase I isoform alpha (CkIalpha) from Drosophila melanogaster (Fruit fly).